We begin with the raw amino-acid sequence, 248 residues long: Proteasome subunit alpha type-3 (248 aa).

This sequence belongs to the peptidase T1A family. The 26S proteasome consists of a 20S proteasome core and two 19S regulatory subunits. The 20S proteasome core is composed of 28 subunits that are arranged in four stacked rings, resulting in a barrel-shaped structure. The two end rings are each formed by seven alpha subunits, and the two central rings are each formed by seven beta subunits. The catalytic chamber with the active sites is on the inside of the barrel.

The protein resides in the cytoplasm. It localises to the nucleus. Its function is as follows. The proteasome is a multicatalytic proteinase complex which is characterized by its ability to cleave peptides with Arg, Phe, Tyr, Leu, and Glu adjacent to the leaving group at neutral or slightly basic pH. The proteasome has an ATP-dependent proteolytic activity. This is Proteasome subunit alpha type-3 (psmA3) from Dictyostelium discoideum (Social amoeba).